The primary structure comprises 558 residues: Phosphatase and actin regulator 3 (558 aa).

Polar residues predominate over residues 1–11 (MAASEDGSSCL). Disordered regions lie at residues 1-69 (MAAS…KLAT), 81-288 (KKKN…RPLP), and 300-366 (LATK…ENLM). Positions 18–33 (QSDPSFLSDSSATSTD) are enriched in low complexity. The residue at position 69 (threonine 69) is a Phosphothreonine. The stretch at 92–117 (SALEKKMAGRQGREELIKQGLLEMME) is one RPEL 1 repeat. Residues 94–108 (LEKKMAGRQGREELI) are compositionally biased toward basic and acidic residues. The segment covering 144-169 (ETLTSEGAQPGSPSASGTDQVSQDEL) has biased composition (polar residues). A compositionally biased stretch (pro residues) spans 228 to 239 (PSPPLLPTPPPK). Serine 229 carries the post-translational modification Phosphoserine. The residue at position 235 (threonine 235) is a Phosphothreonine. 2 stretches are compositionally biased toward basic and acidic residues: residues 300–341 (LATK…RDEA) and 354–363 (ATKDSEENKE). 3 RPEL repeats span residues 400–425 (ELLA…PRRT), 438–463 (MKLS…KQRN), and 476–501 (QRLT…IRFS). A coiled-coil region spans residues 449-485 (AVEELERRNILKQRNDQTEQEERREIKQRLTRKLNQR).

The protein belongs to the phosphatase and actin regulator family. Binds PPP1CA and actin; thus inhibiting the protein phosphatase 1 (PP1) activity.

Its subcellular location is the nucleus matrix. The sequence is that of Phosphatase and actin regulator 3 (Phactr3) from Mus musculus (Mouse).